The chain runs to 222 residues: Charged multivesicular body protein 4a (222 aa).

Disordered regions lie at residues 1–21 (MSGLGRLFGKGKKEKGPTPEE) and 180–211 (VGDKEEEPSVKLPSVPSTHLPAGPAPKVDEDE). Residues 1–116 (MSGLGRLFGK…ELAAQSMKKA (116 aa)) form an interaction with phosphoinosides region. Positions 1 to 150 (MSGLGRLFGK…QISDAISRPM (150 aa)) are intramolecular interaction with C-terminus. 2 coiled-coil regions span residues 20–105 (EEAI…VLRT) and 155–180 (DVDEDELLEELEELEQEELAQELLNV). The segment at 151–222 (GFGDDVDEDE…ALKQLAEWVS (72 aa)) is intramolecular interaction with N-terminus. Phosphoserine is present on serine 196.

This sequence belongs to the SNF7 family. As to quaternary structure, probable core component of the endosomal sorting required for transport complex III (ESCRT-III). ESCRT-III components are thought to multimerize to form a flat lattice on the perimeter membrane of the endosome. Several assembly forms of ESCRT-III may exist that interact and act sequentially. Self-associates; overexpression leads to the assembly of filaments that curve and associate to create circular rings. Interacts with CHMP2A. Interacts with CHMP3; the interaction requires the release of CHMP4A autoinhibition. Interacts with CHMP4B. Interacts with CHMP4C. Interacts with CHMP6. Interacts with VPS4A. Interacts with PDCD6IP; the interaction is direct. As to expression, widely expressed. Expressed at higher level in heart, kidney, liver and skeletal muscle. Also expressed in brain, placenta, lung and pancreas.

Its subcellular location is the cytoplasmic vesicle membrane. The protein localises to the late endosome membrane. Its function is as follows. Probable core component of the endosomal sorting required for transport complex III (ESCRT-III) which is involved in multivesicular bodies (MVBs) formation and sorting of endosomal cargo proteins into MVBs. MVBs contain intraluminal vesicles (ILVs) that are generated by invagination and scission from the limiting membrane of the endosome and mostly are delivered to lysosomes enabling degradation of membrane proteins, such as stimulated growth factor receptors, lysosomal enzymes and lipids. The MVB pathway appears to require the sequential function of ESCRT-O, -I,-II and -III complexes. ESCRT-III proteins mostly dissociate from the invaginating membrane before the ILV is released. The ESCRT machinery also functions in topologically equivalent membrane fission events, such as the terminal stages of cytokinesis and the budding of enveloped viruses (HIV-1 and other lentiviruses). ESCRT-III proteins are believed to mediate the necessary vesicle extrusion and/or membrane fission activities, possibly in conjunction with the AAA ATPase VPS4. When overexpressed, membrane-assembled circular arrays of CHMP4A filaments can promote or stabilize negative curvature and outward budding. Via its interaction with PDCD6IP involved in HIV-1 p6- and p9-dependent virus release. CHMP4A/B/C are required for the exosomal release of SDCBP, CD63 and syndecan. This Homo sapiens (Human) protein is Charged multivesicular body protein 4a (CHMP4A).